A 450-amino-acid chain; its full sequence is Molybdate-anion transporter (450 aa).

Helical transmembrane passes span 1-21 (MLVTAYLSFVGLLASCLGLEL), 38-58 (FLQFQLDFYQVYFLALAADWL), 79-99 (ILYVCGLASTVLFGLVASSLV), 128-148 (FVLLVGRALGGLSTALLFSAF), 167-187 (IPATFARAAFWNHVLAVAAGV), 191-211 (AVASWIGLGPVAPFVAAIPLL), 249-269 (VLLLGVIQALFESVIFIFVFL), 278-298 (GAPLGIVFSSFMAASLLGSSL), 311-331 (PMHLLSLAVLIVVFSLFMLTF), 344-364 (FIAFLLIELACGLYFPSMSFL), 376-396 (GVLNWFRVPLHLLACLGLLVL), and 409-429 (FSICSAVMVTTLLAVAGLFTV).

The protein belongs to the major facilitator superfamily.

The protein localises to the cell membrane. Functionally, mediates high-affinity intracellular uptake of the rare oligo-element molybdenum. The chain is Molybdate-anion transporter (Mfsd5) from Mus musculus (Mouse).